Reading from the N-terminus, the 125-residue chain is Large ribosomal subunit protein bL12 (125 aa).

This sequence belongs to the bacterial ribosomal protein bL12 family. In terms of assembly, homodimer. Part of the 50S ribosomal subunit; present in 6 copies per ribosome. Forms part of the ribosomal stalk which helps the ribosome interact with GTP-bound translation factors. Forms a heptameric L10(L12)2(L12)2(L12)2 complex, where L10 forms an elongated spine to which 3 L12 dimers bind in a sequential fashion.

Its function is as follows. Forms part of the ribosomal stalk which helps the ribosome interact with GTP-bound translation factors. Is thus essential for accurate translation. This chain is Large ribosomal subunit protein bL12, found in Agrobacterium fabrum (strain C58 / ATCC 33970) (Agrobacterium tumefaciens (strain C58)).